The chain runs to 289 residues: Digeranylgeranylglyceryl phosphate synthase (289 aa).

Transmembrane regions (helical) follow at residues 17 to 37, 50 to 70, 106 to 126, 141 to 161, 163 to 183, 221 to 241, 243 to 263, and 269 to 289; these read CLMA…ILTS, LFSS…GNAI, FALG…IALF, TPLL…LFGA, VFGL…ALAI, LIGF…MLGL, YLYL…QLLA, and KSSK…IAGV.

The protein belongs to the UbiA prenyltransferase family. DGGGP synthase subfamily. Mg(2+) serves as cofactor.

The protein resides in the cell membrane. It carries out the reaction sn-3-O-(geranylgeranyl)glycerol 1-phosphate + (2E,6E,10E)-geranylgeranyl diphosphate = 2,3-bis-O-(geranylgeranyl)-sn-glycerol 1-phosphate + diphosphate. It participates in membrane lipid metabolism; glycerophospholipid metabolism. Functionally, prenyltransferase that catalyzes the transfer of the geranylgeranyl moiety of geranylgeranyl diphosphate (GGPP) to the C2 hydroxyl of (S)-3-O-geranylgeranylglyceryl phosphate (GGGP). This reaction is the second ether-bond-formation step in the biosynthesis of archaeal membrane lipids. This Methanosarcina barkeri (strain Fusaro / DSM 804) protein is Digeranylgeranylglyceryl phosphate synthase.